Consider the following 514-residue polypeptide: 1,25-dihydroxyvitamin D(3) 24-hydroxylase, mitochondrial (514 aa).

The transit peptide at 1–35 (MSCPIDKRRPLIAFLRRLRDLGQPPRSVTSKAHVK) directs the protein to the mitochondrion. C462 contributes to the heme binding site.

Belongs to the cytochrome P450 family. Requires heme as cofactor.

Its subcellular location is the mitochondrion. The catalysed reaction is calcitriol + 2 reduced [adrenodoxin] + O2 + 2 H(+) = calcitetrol + 2 oxidized [adrenodoxin] + H2O. It catalyses the reaction calcitetrol + 2 reduced [adrenodoxin] + O2 + 2 H(+) = (1S)-1,25-dihydroxy-24-oxocalciol + 2 oxidized [adrenodoxin] + 2 H2O. The enzyme catalyses (1S)-1,25-dihydroxy-24-oxocalciol + 2 reduced [adrenodoxin] + O2 + 2 H(+) = (1S)-1,23,25-trihydroxy-24-oxocalciol + 2 oxidized [adrenodoxin] + H2O. It carries out the reaction (1S)-1,23-dihydroxy-24,25,26,27-tetranorcalciol + 2 reduced [adrenodoxin] + O2 + 2 H(+) = (1S)-1-hydroxy-23-oxo-24,25,26,27-tetranorcalciol + 2 oxidized [adrenodoxin] + 2 H2O. The catalysed reaction is (1S)-1-hydroxy-23-oxo-24,25,26,27-tetranorcalciol + 2 reduced [adrenodoxin] + O2 + H(+) = calcitroate + 2 oxidized [adrenodoxin] + H2O. It catalyses the reaction calcidiol + 2 reduced [adrenodoxin] + O2 + 2 H(+) = secalciferol + 2 oxidized [adrenodoxin] + H2O. The enzyme catalyses secalciferol + 2 reduced [adrenodoxin] + O2 + 2 H(+) = 25-hydroxy-24-oxocalciol + 2 oxidized [adrenodoxin] + 2 H2O. It carries out the reaction 25-hydroxy-24-oxocalciol + 2 reduced [adrenodoxin] + O2 + 2 H(+) = 23S,25-dihydroxy-24-oxocholecalciferol + 2 oxidized [adrenodoxin] + H2O. The catalysed reaction is 20S,23-dihydroxycholecalciferol + 2 reduced [adrenodoxin] + O2 + 2 H(+) = 20S,23,25-trihydroxycholecalciferol + 2 oxidized [adrenodoxin] + H2O. It catalyses the reaction 20S,23-dihydroxycholecalciferol + 2 reduced [adrenodoxin] + O2 + 2 H(+) = 20S,23,24-trihydroxycholecalciferol + 2 oxidized [adrenodoxin] + H2O. The enzyme catalyses 20S-hydroxycholecalciferol + 2 reduced [adrenodoxin] + O2 + 2 H(+) = 20S,25-dihydroxycholecalciferol + 2 oxidized [adrenodoxin] + H2O. It carries out the reaction 20S-hydroxycholecalciferol + 2 reduced [adrenodoxin] + O2 + 2 H(+) = 20S,24S-dihydroxycholecalciferol + 2 oxidized [adrenodoxin] + H2O. The catalysed reaction is 20S-hydroxycholecalciferol + 2 reduced [adrenodoxin] + O2 + 2 H(+) = 20S,24R-dihydroxycholecalciferol + 2 oxidized [adrenodoxin] + H2O. Its function is as follows. A cytochrome P450 monooxygenase with a key role in vitamin D catabolism and calcium homeostasis. Via C24-oxidation pathway, catalyzes the inactivation of both the vitamin D precursor calcidiol (25-hydroxyvitamin D(3)) and the active hormone calcitriol (1-alpha,25-dihydroxyvitamin D(3)). With initial hydroxylation at C-24 (via C24-oxidation pathway), performs a sequential 6-step oxidation of calcitriol leading to the formation of the biliary metabolite calcitroic acid. Hydroxylates at C-24 or C-25 other vitamin D active metabolites, such as CYP11A1-derived secosteroids 20S-hydroxycholecalciferol and 20S,23-dihydroxycholecalciferol. Mechanistically, uses molecular oxygen inserting one oxygen atom into a substrate, and reducing the second into a water molecule, with two electrons provided by NADPH via FDXR/adrenodoxin reductase and FDX1/adrenodoxin. In Mus musculus (Mouse), this protein is 1,25-dihydroxyvitamin D(3) 24-hydroxylase, mitochondrial.